An 845-amino-acid chain; its full sequence is Tyrosine-protein phosphatase corkscrew (845 aa).

SH2 domains lie at 6 to 101 (WFHP…KQPL) and 111 to 205 (WFHG…RQPF). In terms of domain architecture, Tyrosine-protein phosphatase spans 227–645 (FWEEFESLQQ…KFVYYAVQHY (419 aa)). Residues 289 to 444 (IRLPTDGDLY…REREREMFKT (156 aa)) form a PTPase insert (Cys/Ser-rich) region. Residues 362–402 (SKHKRSESSASSSPSSGSGSGPGSSGTSGVSSVNGPGTPTN) form a disordered region. Low complexity-rich tracts occupy residues 369-378 (SSASSSPSSG) and 388-400 (TSGVSSVNGPGTP). At Ser-419 the chain carries Phosphoserine. Residues Asp-545, 583 to 589 (CSAGIGR), and Gln-630 contribute to the substrate site. Cys-583 (phosphocysteine intermediate) is an active-site residue. A disordered region spans residues 793-824 (DSLKQQQQREEQAPAGAGKMQQPAPPLRPRPG).

The protein belongs to the protein-tyrosine phosphatase family. Non-receptor class subfamily. As to quaternary structure, interacts with drpr isoform A. Expressed uniformly throughout all tissues during embryogenesis.

Its subcellular location is the cytoplasm. The catalysed reaction is O-phospho-L-tyrosyl-[protein] + H2O = L-tyrosyl-[protein] + phosphate. Functionally, required in all receptor tyrosine kinase signaling pathways. Functions downstream of the receptor tyrosine kinase torso, acting in concert with D-Raf via tailless. Also functions downstream of Egfr (epidermal growth factor receptor) and btl (fibroblast growth factor receptor). The SH2 domain suggests that csw effects its role by mediating heteromeric protein interactions. Maternally required for normal determination of cell fates at the termini of the embryo. Required for cell fate specification of the ventral ectoderm, in the developing embryonic CNS and for embryonic tracheal cell migration. Functions during imaginal development for proper formation of adult structures such as eyes, aristae, L5 wing vein and the tarsal claw. Dephosphorylates drpr isoform A which is required for the inhibition by drpr isoform A of glial cell engulfment of axonal debris produced following axonal injury. This is Tyrosine-protein phosphatase corkscrew (csw) from Drosophila melanogaster (Fruit fly).